Here is a 108-residue protein sequence, read N- to C-terminus: ATP-dependent Clp protease adapter protein ClpS (108 aa).

Positions 1 to 15 are enriched in basic and acidic residues; that stretch reads MPRESSPDSHHEHGV. A disordered region spans residues 1–24; that stretch reads MPRESSPDSHHEHGVAVEPARPEV.

It belongs to the ClpS family. In terms of assembly, binds to the N-terminal domain of the chaperone ClpA.

Its function is as follows. Involved in the modulation of the specificity of the ClpAP-mediated ATP-dependent protein degradation. This Stenotrophomonas maltophilia (strain R551-3) protein is ATP-dependent Clp protease adapter protein ClpS.